Consider the following 739-residue polypeptide: Phosphoribosylformylglycinamidine synthase subunit PurL (739 aa).

H53 is an active-site residue. Positions 56 and 95 each coordinate ATP. Residue E97 participates in Mg(2+) binding. Substrate contacts are provided by residues 98–101 (SHNH) and R120. Residue H99 is the Proton acceptor of the active site. D121 provides a ligand contact to Mg(2+). Q244 provides a ligand contact to substrate. D274 contacts Mg(2+). 318-320 (ESQ) provides a ligand contact to substrate. D501 and G538 together coordinate ATP. N539 contributes to the Mg(2+) binding site. S541 serves as a coordination point for substrate.

It belongs to the FGAMS family. In terms of assembly, monomer. Part of the FGAM synthase complex composed of 1 PurL, 1 PurQ and 2 PurS subunits.

The protein localises to the cytoplasm. It carries out the reaction N(2)-formyl-N(1)-(5-phospho-beta-D-ribosyl)glycinamide + L-glutamine + ATP + H2O = 2-formamido-N(1)-(5-O-phospho-beta-D-ribosyl)acetamidine + L-glutamate + ADP + phosphate + H(+). Its pathway is purine metabolism; IMP biosynthesis via de novo pathway; 5-amino-1-(5-phospho-D-ribosyl)imidazole from N(2)-formyl-N(1)-(5-phospho-D-ribosyl)glycinamide: step 1/2. In terms of biological role, part of the phosphoribosylformylglycinamidine synthase complex involved in the purines biosynthetic pathway. Catalyzes the ATP-dependent conversion of formylglycinamide ribonucleotide (FGAR) and glutamine to yield formylglycinamidine ribonucleotide (FGAM) and glutamate. The FGAM synthase complex is composed of three subunits. PurQ produces an ammonia molecule by converting glutamine to glutamate. PurL transfers the ammonia molecule to FGAR to form FGAM in an ATP-dependent manner. PurS interacts with PurQ and PurL and is thought to assist in the transfer of the ammonia molecule from PurQ to PurL. The chain is Phosphoribosylformylglycinamidine synthase subunit PurL from Listeria welshimeri serovar 6b (strain ATCC 35897 / DSM 20650 / CCUG 15529 / CIP 8149 / NCTC 11857 / SLCC 5334 / V8).